The sequence spans 389 residues: Formate-dependent phosphoribosylglycinamide formyltransferase (389 aa).

N(1)-(5-phospho-beta-D-ribosyl)glycinamide-binding positions include 15–16 (EL) and E75. ATP contacts are provided by residues R107, K148, 153–158 (SSGKGQ), 188–191 (EEFL), and E196. One can recognise an ATP-grasp domain in the interval 112 to 302 (NLAAGELGLR…EFDLHLRAVL (191 aa)). 2 residues coordinate Mg(2+): E261 and E273. N(1)-(5-phospho-beta-D-ribosyl)glycinamide-binding positions include D280, K350, and 357–358 (RR).

The protein belongs to the PurK/PurT family. As to quaternary structure, homodimer.

The catalysed reaction is N(1)-(5-phospho-beta-D-ribosyl)glycinamide + formate + ATP = N(2)-formyl-N(1)-(5-phospho-beta-D-ribosyl)glycinamide + ADP + phosphate + H(+). The protein operates within purine metabolism; IMP biosynthesis via de novo pathway; N(2)-formyl-N(1)-(5-phospho-D-ribosyl)glycinamide from N(1)-(5-phospho-D-ribosyl)glycinamide (formate route): step 1/1. Involved in the de novo purine biosynthesis. Catalyzes the transfer of formate to 5-phospho-ribosyl-glycinamide (GAR), producing 5-phospho-ribosyl-N-formylglycinamide (FGAR). Formate is provided by PurU via hydrolysis of 10-formyl-tetrahydrofolate. This is Formate-dependent phosphoribosylglycinamide formyltransferase from Synechococcus sp. (strain CC9311).